Reading from the N-terminus, the 515-residue chain is 2-isopropylmalate synthase (515 aa).

The 263-residue stretch at 4–266 (INIFDTTLRD…ETRLNLQEIK (263 aa)) folds into the Pyruvate carboxyltransferase domain. 4 residues coordinate Mn(2+): aspartate 13, histidine 201, histidine 203, and asparagine 237. A regulatory domain region spans residues 391 to 515 (QLSSLQVQYG…RAENQKVAMQ (125 aa)).

It belongs to the alpha-IPM synthase/homocitrate synthase family. LeuA type 1 subfamily. In terms of assembly, homodimer. Mn(2+) is required as a cofactor.

Its subcellular location is the cytoplasm. The enzyme catalyses 3-methyl-2-oxobutanoate + acetyl-CoA + H2O = (2S)-2-isopropylmalate + CoA + H(+). The protein operates within amino-acid biosynthesis; L-leucine biosynthesis; L-leucine from 3-methyl-2-oxobutanoate: step 1/4. In terms of biological role, catalyzes the condensation of the acetyl group of acetyl-CoA with 3-methyl-2-oxobutanoate (2-ketoisovalerate) to form 3-carboxy-3-hydroxy-4-methylpentanoate (2-isopropylmalate). This is 2-isopropylmalate synthase from Geobacillus sp. (strain WCH70).